Here is a 174-residue protein sequence, read N- to C-terminus: Endoribonuclease YbeY (174 aa).

Residues H133, H137, and H143 each contribute to the Zn(2+) site.

Belongs to the endoribonuclease YbeY family. Requires Zn(2+) as cofactor.

It localises to the cytoplasm. Functionally, single strand-specific metallo-endoribonuclease involved in late-stage 70S ribosome quality control and in maturation of the 3' terminus of the 16S rRNA. The protein is Endoribonuclease YbeY of Paracoccus denitrificans (strain Pd 1222).